The chain runs to 683 residues: MSALNSLPLPVVRLLAFFHEELSERRPGRVPQTVQLWVGCLLVILISMTFEIPFVALSLAVLFYGIQSNAFYTKFVAILFVVATVLEIGSLFLIYKWSYGEPLIRLIIAGPILMGCMFLMRTHRLGLVFFAVAIVAIYGQTFPAMLDYPEVVVRLTLWCIVVGLYPTLLMTLIGVLWFPSRAISQMHQALNDRLDDAISHLTDSLAPLPETRIEREALALQKLNVFCLADDANWRTQNAWWQSCVATVTYIYSTLNRYDPTSFADSQAIIEFRQKLASEINKLQHAVAEGQCWQSDWRISESEAMAARECNLENICQTLLQLGQMDPNTPPTPAAKPPSMAADAFTNPDYMRYAVKTLLACLICYTFYSGVDWEGIHTCMLTCVIVANPNVGSSYQKMVLRFGGAFCGAILALLFTLLVMPWLDNIVELLFVLAPIFLLGAWIATSSERSSYIGTQMVVTFALATLENVFGPVYDLVEIRDRALGIIIGTVVSAVIYTFVWPESEARTLPQKLAGTLGMLSKVMRIPRQQEVTALRTYLQIRIGLHAAFNACEEMCQRVALERQLDSEERALLIERSQTVIRQGRDLLHAWDATWNSAQALDNALQPDRAGQFADALEKYAAGLATALSRSPQITLEETPASQAILPTLLKQEQHVCQLFARLPDWTAPALTPATEQAQGATQ.

9 consecutive transmembrane segments (helical) span residues 43-63 (VILI…AVLF), 75-95 (FVAI…FLIY), 100-120 (GEPL…MFLM), 125-145 (LGLV…FPAM), 158-178 (WCIV…VLWF), 402-422 (FGGA…VMPW), 426-446 (IVEL…IATS), 457-477 (MVVT…YDLV), and 483-503 (ALGI…VWPE).

Belongs to the MdtO family. As to quaternary structure, could be part of a tripartite efflux system composed of MdtN, MdtO and MdtP.

Its subcellular location is the cell inner membrane. In terms of biological role, could be involved in resistance to puromycin, acriflavine and tetraphenylarsonium chloride. The protein is Multidrug resistance protein MdtO (mdtO) of Escherichia coli (strain K12).